We begin with the raw amino-acid sequence, 274 residues long: Nitrogenase iron protein (274 aa).

8–15 (GKGGIGKS) contacts ATP. C94 provides a ligand contact to [4Fe-4S] cluster. ADP-ribosylarginine; by dinitrogenase reductase ADP-ribosyltransferase is present on R97. C131 contributes to the [4Fe-4S] cluster binding site.

Belongs to the NifH/BchL/ChlL family. In terms of assembly, homodimer. It depends on [4Fe-4S] cluster as a cofactor. Post-translationally, the reversible ADP-ribosylation of Arg-97 inactivates the nitrogenase reductase and regulates nitrogenase activity.

It catalyses the reaction N2 + 8 reduced [2Fe-2S]-[ferredoxin] + 16 ATP + 16 H2O = H2 + 8 oxidized [2Fe-2S]-[ferredoxin] + 2 NH4(+) + 16 ADP + 16 phosphate + 6 H(+). Its function is as follows. The key enzymatic reactions in nitrogen fixation are catalyzed by the nitrogenase complex, which has 2 components: the iron protein and the molybdenum-iron protein. This Chlorobium luteolum (strain DSM 273 / BCRC 81028 / 2530) (Pelodictyon luteolum) protein is Nitrogenase iron protein.